A 346-amino-acid chain; its full sequence is Formimidoylglutamase (346 aa).

Mn(2+)-binding residues include histidine 145, aspartate 180, histidine 182, aspartate 184, aspartate 271, and aspartate 273.

It belongs to the arginase family. Mn(2+) is required as a cofactor.

It carries out the reaction N-formimidoyl-L-glutamate + H2O = formamide + L-glutamate. It participates in amino-acid degradation; L-histidine degradation into L-glutamate; L-glutamate from N-formimidoyl-L-glutamate (hydrolase route): step 1/1. Functionally, catalyzes the conversion of N-formimidoyl-L-glutamate to L-glutamate and formamide. This Psychrobacter cryohalolentis (strain ATCC BAA-1226 / DSM 17306 / VKM B-2378 / K5) protein is Formimidoylglutamase.